Here is a 203-residue protein sequence, read N- to C-terminus: MAKAYDHLFKLLLIGDSGVGKTCLIIRFAEDNFNSTYISTIGIDFKIRTVEIEGKRIKLQVWDTAGQERFKTITTAYYRGAMGIILVYDITDEKSFENIQNWMKSIKENASAGVERLLLGNKCDMEAKRKVQREQAERLAREHRIRFFETSAKSSVNVDEAFSSLARDILLKTGGRRSGNSSKPSSTDLKVSDKKNSNKCSLG.

Residues S17, G18, G20, K21, T22, C23, and T40 each contribute to the GTP site. T22 provides a ligand contact to Mg(2+). The Switch 1 signature appears at 31-45; that stretch reads DNFNSTYISTIGIDF. T40 serves as a coordination point for Mg(2+). Residues K46 and K58 each participate in a glycyl lysine isopeptide (Lys-Gly) (interchain with G-Cter in ubiquitin) cross-link. D63 provides a ligand contact to Mg(2+). The Switch 2 motif lies at 63–80; the sequence is DTAGQERFKTITTAYYRG. Residues G66, N121, K122, D124, A152, and K153 each contribute to the GTP site. A disordered region spans residues 173 to 203; sequence TGGRRSGNSSKPSSTDLKVSDKKNSNKCSLG. The residue at position 178 (S178) is a Phosphoserine. Residues 178–189 show a composition bias toward polar residues; it reads SGNSSKPSSTDL. Residue C200 is modified to Cysteine methyl ester. C200 is lipidated: S-geranylgeranyl cysteine. A propeptide spans 201–203 (removed in mature form); the sequence is SLG.

Belongs to the small GTPase superfamily. Rab family. In terms of assembly, interacts (GTP-bound form) with MICALL2; competes with RAB8A and is involved in tight junctions assembly. Interacts (GTP-bound form) with MICALL1. Interacts (GTP-bound form) with MICAL1, MICAL3, MICALCL, EHBP1 and EHBP1L1; ternary complexes of RAB8A, RAB13 and either MICAL1 or EHBP1L1 are possible. Interacts with PRKACA; downstream effector of RAB13 involved in tight junction assembly. Interacts with GRB2; may recruit RAB13 to the leading edge of migrating endothelial cells where it can activate RHOA. Interacts (isoprenylated form) with PDE6D; dissociates RAB13 from membranes. Interacts with BICDL2/BICDR2. Interacts with LEPROT and LEPROTL1. Mg(2+) serves as cofactor. In terms of processing, ubiquitinated via 'Lys-11'-linked ubiquitination on Lys-46 and Lys-58; impairing the recruitment of guanosine diphosphate (GDP) dissociation inhibitor 1/GDI1. As to expression, highest levels found in lung, kidney, whole brain and spinal cord. Expressed in all tissues tested including Sertoli and germ cells (at protein level). Also detected in osteoclasts.

The protein resides in the cell membrane. It localises to the cytoplasmic vesicle membrane. It is found in the cell junction. The protein localises to the tight junction. Its subcellular location is the golgi apparatus. The protein resides in the trans-Golgi network membrane. It localises to the recycling endosome membrane. It is found in the cell projection. The protein localises to the lamellipodium. The enzyme catalyses GTP + H2O = GDP + phosphate + H(+). Its activity is regulated as follows. Regulated by guanine nucleotide exchange factors (GEFs) including DENND1C, which promote the exchange of bound GDP for free GTP. Regulated by GTPase activating proteins (GAPs) which increase the GTP hydrolysis activity. Inhibited by GDP dissociation inhibitors (GDIs). Activated in response to insulin. The small GTPases Rab are key regulators of intracellular membrane trafficking, from the formation of transport vesicles to their fusion with membranes. Rabs cycle between an inactive GDP-bound form and an active GTP-bound form that is able to recruit to membranes different sets of downstream effectors directly responsible for vesicle formation, movement, tethering and fusion. RAB13 is involved in endocytic recycling and regulates the transport to the plasma membrane of transmembrane proteins like the tight junction protein OCLN/occludin. Thereby, it regulates the assembly and the activity of tight junctions. Moreover, it may also regulate tight junction assembly by activating the PKA signaling pathway and by reorganizing the actin cytoskeleton through the activation of the downstream effectors PRKACA and MICALL2 respectively. Through its role in tight junction assembly, may play a role in the establishment of Sertoli cell barrier. Plays also a role in angiogenesis through regulation of endothelial cells chemotaxis. Also involved in neurite outgrowth. Has also been proposed to play a role in post-Golgi membrane trafficking from the TGN to the recycling endosome. Finally, it has been involved in insulin-induced transport to the plasma membrane of the glucose transporter GLUT4 and therefore may play a role in glucose homeostasis. This Rattus norvegicus (Rat) protein is Ras-related protein Rab-13.